A 349-amino-acid polypeptide reads, in one-letter code: Cdc42 effector protein 4 (349 aa).

K5 carries the post-translational modification N6-methyllysine. S18 is subject to Phosphoserine. One can recognise a CRIB domain in the interval 27 to 41 (ISAPLGDFRHTMHVG). A phosphoserine mark is found at S64, S103, S107, and S116. Over residues 123–132 (KEAAEKDSSK) the composition is skewed to basic and acidic residues. Disordered stretches follow at residues 123-172 (KEAA…LLDE), 220-240 (QWGSEEEEEAGGYRDKEGPSS), and 278-349 (GWAV…EIRV). 8 positions are modified to phosphoserine: S136, S138, S140, S154, S165, S223, S285, and S288. Residues 280–308 (AVVAPSPSSARSVGSHTTRDSSSLSSYTS) show a composition bias toward low complexity. Residues 311 to 322 (LEERSPAFRGPD) are compositionally biased toward basic and acidic residues. Residues 338-349 (FMDEEEEDEIRV) show a composition bias toward acidic residues.

This sequence belongs to the BORG/CEP family. In terms of assembly, interacts with CDC42 and RHOQ, in a GTP-dependent manner. Ubiquitous.

It is found in the endomembrane system. The protein localises to the cytoplasm. Its subcellular location is the cytoskeleton. Its function is as follows. Probably involved in the organization of the actin cytoskeleton. May act downstream of CDC42 to induce actin filament assembly leading to cell shape changes. Induces pseudopodia formation, when overexpressed in fibroblasts. This Mus musculus (Mouse) protein is Cdc42 effector protein 4 (Cdc42ep4).